A 543-amino-acid polypeptide reads, in one-letter code: Chaperonin GroEL 2 (543 aa).

ATP contacts are provided by residues 29–32 (TLGP), 86–90 (DGTTT), G413, 479–481 (NAA), and D495.

This sequence belongs to the chaperonin (HSP60) family. As to quaternary structure, forms a cylinder of 14 subunits composed of two heptameric rings stacked back-to-back. Interacts with the co-chaperonin GroES.

It is found in the cytoplasm. It catalyses the reaction ATP + H2O + a folded polypeptide = ADP + phosphate + an unfolded polypeptide.. Functionally, together with its co-chaperonin GroES, plays an essential role in assisting protein folding. The GroEL-GroES system forms a nano-cage that allows encapsulation of the non-native substrate proteins and provides a physical environment optimized to promote and accelerate protein folding. This is Chaperonin GroEL 2 from Prochlorococcus marinus (strain NATL1A).